The chain runs to 293 residues: ATP synthase gamma chain (293 aa).

Belongs to the ATPase gamma chain family. In terms of assembly, F-type ATPases have 2 components, CF(1) - the catalytic core - and CF(0) - the membrane proton channel. CF(1) has five subunits: alpha(3), beta(3), gamma(1), delta(1), epsilon(1). CF(0) has three main subunits: a, b and c.

It is found in the cell inner membrane. In terms of biological role, produces ATP from ADP in the presence of a proton gradient across the membrane. The gamma chain is believed to be important in regulating ATPase activity and the flow of protons through the CF(0) complex. This chain is ATP synthase gamma chain, found in Chlorobium chlorochromatii (strain CaD3).